A 99-amino-acid chain; its full sequence is Orphan antixoxin protein TacA (99 aa).

It belongs to the TacA antitoxin family.

Putative antitoxin component of a toxin-antitoxin (TA) system; its cognate toxin (usually a tRNA acetylase) is unknown. The sequence is that of Orphan antixoxin protein TacA from Haemophilus influenzae (strain ATCC 51907 / DSM 11121 / KW20 / Rd).